Reading from the N-terminus, the 173-residue chain is Adenine phosphoribosyltransferase (173 aa).

This sequence belongs to the purine/pyrimidine phosphoribosyltransferase family. As to quaternary structure, homodimer.

The protein resides in the cytoplasm. The catalysed reaction is AMP + diphosphate = 5-phospho-alpha-D-ribose 1-diphosphate + adenine. The protein operates within purine metabolism; AMP biosynthesis via salvage pathway; AMP from adenine: step 1/1. Catalyzes a salvage reaction resulting in the formation of AMP, that is energically less costly than de novo synthesis. The sequence is that of Adenine phosphoribosyltransferase from Listeria monocytogenes serovar 1/2a (strain ATCC BAA-679 / EGD-e).